Reading from the N-terminus, the 322-residue chain is Ribosomal lysine N-methyltransferase 5 (322 aa).

S-adenosyl-L-methionine is bound by residues tryptophan 92, 141–143, aspartate 163, tryptophan 214, and methionine 242; that span reads GTG.

It belongs to the class I-like SAM-binding methyltransferase superfamily. RKM5 family.

S-adenosyl-L-methionine-dependent protein-lysine N-methyltransferase that methylates 60S ribosomal protein L1. This is Ribosomal lysine N-methyltransferase 5 (RKM5) from Kluyveromyces lactis (strain ATCC 8585 / CBS 2359 / DSM 70799 / NBRC 1267 / NRRL Y-1140 / WM37) (Yeast).